A 417-amino-acid polypeptide reads, in one-letter code: Aminoacyltransferase FemB (417 aa).

This sequence belongs to the FemABX family.

It localises to the cytoplasm. The catalysed reaction is MurNAc-L-Ala-D-isoglutaminyl-L-Lys-(N(6)-tri-Gly)-D-Ala-D-Ala-diphospho-di-trans,octa-cis-undecaprenyl-GlcNAc + 2 glycyl-tRNA(Gly) = MurNAc-L-Ala-D-isoglutaminyl-L-Lys-(N(6)-penta-Gly)-D-Ala-D-Ala-diphospho-di-trans,octa-cis-undecaprenyl-GlcNAc + 2 tRNA(Gly) + 2 H(+). Functionally, catalyzes the incorporation of amino acid(s) into the interchain peptide bridge of peptidoglycan, using aminoacyl-tRNA as amino acid donor. The protein is Aminoacyltransferase FemB (femB) of Staphylococcus epidermidis (strain ATCC 12228 / FDA PCI 1200).